A 218-amino-acid polypeptide reads, in one-letter code: Probable carboxylesterase clz11 (218 aa).

The Involved in the stabilization of the negatively charged intermediate by the formation of the oxyanion hole motif lies at 7–9 (LVG). Ser77 is a catalytic residue.

Belongs to the 'GDXG' lipolytic enzyme family.

It catalyses the reaction a carboxylic ester + H2O = an alcohol + a carboxylate + H(+). It participates in secondary metabolite biosynthesis. Probable carboxylesterase; part of the gene cluster that mediates the biosynthesis of squalestatin S1 (SQS1, also known as zaragozic acid A), a heavily oxidized fungal polyketide that offers potent cholesterol lowering activity by targeting squalene synthase (SS). SQS1 is composed of a 2,8-dioxobicyclic[3.2.1]octane-3,4,5-tricarboxyclic acid core that is connected to two lipophilic polyketide arms. These initial steps feature the priming of an unusual benzoic acid starter unit onto the highly reducing polyketide synthase clz14, followed by oxaloacetate extension and product release to generate a tricarboxylic acid containing product. The phenylalanine ammonia lyase (PAL) clz10 and the acyl-CoA ligase clz12 are involved in transforming phenylalanine into benzoyl-CoA. The citrate synthase-like protein clz17 is involved in connecting the C-alpha-carbons of the hexaketide chain and oxaloacetate to afford the tricarboxylic acid unit. The potential hydrolytic enzymes, clz11 and clz13, are in close proximity to pks2 and may participate in product release. On the other side, the tetraketide arm is synthesized by a the squalestatin tetraketide synthase clz2 and enzymatically esterified to the core in the last biosynthetic step, by the acetyltransferase clz6. The biosynthesis of the tetraketide must involve 3 rounds of chain extension. After the first and second rounds methyl-transfer occurs, and in all rounds of extension the ketoreductase and dehydratase are active. The enoyl reductase and C-MeT of clz2 are not active in the final round of extension. The acetyltransferase clz6 appears to have a broad substrate selectivity for its acyl CoA substrate, allowing the in vitro synthesis of novel squalestatins. The biosynthesis of SQS1 requires several oxidative steps likely performed by oxidoreductases clz3, clz15 and clz16. Finally, in support of the identification of the cluster as being responsible for SQS1 production, the cluster contains a gene encoding a putative squalene synthase (SS) clz20, suggesting a likely mechanism for self-resistance. The sequence is that of Probable carboxylesterase clz11 from Cochliobolus lunatus (Filamentous fungus).